Here is a 192-residue protein sequence, read N- to C-terminus: 4'-phosphopantetheinyl transferase AcpT (192 aa).

Belongs to the P-Pant transferase superfamily. Gsp/Sfp/HetI/AcpT family.

It catalyses the reaction apo-[ACP] + CoA = holo-[ACP] + adenosine 3',5'-bisphosphate + H(+). Functionally, may be involved in an alternative pathway for phosphopantetheinyl transfer and holo-ACP synthesis. The native apo-protein substrate is unknown. This is 4'-phosphopantetheinyl transferase AcpT (acpT) from Salmonella typhi.